The primary structure comprises 538 residues: Atos homolog protein B (538 aa).

Low complexity predominate over residues 1–18; that stretch reads MRHVQAEPSPSSEPEAGP. Disordered regions lie at residues 1-103, 156-185, and 197-308; these read MRHV…GLLG, HTRDWASPDPGGHGSLGESPGPAPPGQLHT, and GGKS…PMGR. A compositionally biased stretch (pro residues) spans 227–238; it reads HTPPGPGPPGPC. 2 positions are modified to phosphoserine: Ser254 and Ser255. The span at 274 to 286 shows a compositional bias: polar residues; that stretch reads AANSSDAKATSFW. The tract at residues 348–430 is required for macropage invasion; that stretch reads LLGNFEESLL…VPKVGTVQVT (83 aa). Residues 436–444 form a transactivation domain 1 (TAD1) region; sequence QTVVKMFLV.

The protein belongs to the ATOS family.

It is found in the nucleus. In terms of biological role, transcription regulator that may syncronize transcriptional and translational programs. The sequence is that of Atos homolog protein B from Macaca fascicularis (Crab-eating macaque).